A 233-amino-acid polypeptide reads, in one-letter code: Orotidine 5'-phosphate decarboxylase (233 aa).

Substrate is bound by residues D11, K34, 61–70, T117, R179, Q188, G208, and R209; that span reads DLKLHDIPNT. K63 acts as the Proton donor in catalysis.

Belongs to the OMP decarboxylase family. Type 1 subfamily. Homodimer.

The enzyme catalyses orotidine 5'-phosphate + H(+) = UMP + CO2. It participates in pyrimidine metabolism; UMP biosynthesis via de novo pathway; UMP from orotate: step 2/2. In terms of biological role, catalyzes the decarboxylation of orotidine 5'-monophosphate (OMP) to uridine 5'-monophosphate (UMP). This chain is Orotidine 5'-phosphate decarboxylase, found in Streptococcus pneumoniae serotype 4 (strain ATCC BAA-334 / TIGR4).